The following is a 492-amino-acid chain: Transmembrane protein 39B (492 aa).

The tract at residues 1 to 53 (MGGRRGPNRTSYYRNPLCEPGSSGASGGGHSSSASVSSVRSRSRTTSGTGLSS) is disordered. N-linked (GlcNAc...) asparagine glycosylation occurs at N8. Low complexity predominate over residues 31 to 53 (SSSASVSSVRSRSRTTSGTGLSS). The next 8 helical transmembrane spans lie at 77-97 (SILF…VHYI), 115-135 (TSLN…IVLG), 153-175 (SLFR…GWSL), 185-205 (TYSF…IPFL), 288-308 (EVLV…VWFV), 322-342 (LFLL…LPAS), 421-441 (ILNI…YSLM), and 447-467 (HQTI…FKLL).

Belongs to the TMEM39 family.

Its subcellular location is the endoplasmic reticulum membrane. In terms of biological role, may protect the cells against DNA damage caused by exposure to the cold-warming stress and facilitates tissue damage repair during the recovery phase. This is Transmembrane protein 39B from Rattus norvegicus (Rat).